Here is a 444-residue protein sequence, read N- to C-terminus: Multidrug resistance protein MdtA (444 aa).

An N-terminal signal peptide occupies residues methionine 1–alanine 20. Positions asparagine 37–serine 52 are enriched in polar residues. 2 disordered regions span residues asparagine 37–proline 60 and threonine 398–serine 444. The segment covering alanine 409–glutamate 419 has biased composition (low complexity). Over residues alanine 435–serine 444 the composition is skewed to polar residues.

It belongs to the membrane fusion protein (MFP) (TC 8.A.1) family. Part of a tripartite efflux system composed of MdtA, MdtB and MdtC.

Its subcellular location is the cell inner membrane. The polypeptide is Multidrug resistance protein MdtA (Yersinia pseudotuberculosis serotype O:3 (strain YPIII)).